Here is a 218-residue protein sequence, read N- to C-terminus: Thiopurine S-methyltransferase (218 aa).

The S-adenosyl-L-methionine site is built by Trp10, Leu45, Glu66, and Arg123.

This sequence belongs to the class I-like SAM-binding methyltransferase superfamily. TPMT family.

Its subcellular location is the cytoplasm. The catalysed reaction is S-adenosyl-L-methionine + a thiopurine = S-adenosyl-L-homocysteine + a thiopurine S-methylether.. This chain is Thiopurine S-methyltransferase, found in Shewanella loihica (strain ATCC BAA-1088 / PV-4).